Consider the following 184-residue polypeptide: Transcription termination/antitermination protein NusG (184 aa).

Belongs to the NusG family.

In terms of biological role, participates in transcription elongation, termination and antitermination. This Borreliella burgdorferi (strain ATCC 35210 / DSM 4680 / CIP 102532 / B31) (Borrelia burgdorferi) protein is Transcription termination/antitermination protein NusG.